Here is a 232-residue protein sequence, read N- to C-terminus: 26S proteasome non-ATPase regulatory subunit 10 (232 aa).

6 ANK repeats span residues 45 to 75 (DERT…SPNT), 79 to 108 (GGWT…DPNT), 112 to 141 (SKRT…KNRK), 144 to 173 (TGSA…NINS), 177 to 206 (EGDT…DTTI), and 210 to 232 (DSKT…EFKK).

Acts as a chaperone during the assembly of the 26S proteasome, specifically of the 19S regulatory complex (RC). The chain is 26S proteasome non-ATPase regulatory subunit 10 (psmD10) from Dictyostelium discoideum (Social amoeba).